Reading from the N-terminus, the 108-residue chain is Phosphoribosyl-ATP pyrophosphatase (108 aa).

It belongs to the PRA-PH family.

Its subcellular location is the cytoplasm. It carries out the reaction 1-(5-phospho-beta-D-ribosyl)-ATP + H2O = 1-(5-phospho-beta-D-ribosyl)-5'-AMP + diphosphate + H(+). Its pathway is amino-acid biosynthesis; L-histidine biosynthesis; L-histidine from 5-phospho-alpha-D-ribose 1-diphosphate: step 2/9. This Chromobacterium violaceum (strain ATCC 12472 / DSM 30191 / JCM 1249 / CCUG 213 / NBRC 12614 / NCIMB 9131 / NCTC 9757 / MK) protein is Phosphoribosyl-ATP pyrophosphatase.